The primary structure comprises 863 residues: Cilia- and flagella-associated protein 58 (863 aa).

Coiled coils occupy residues Thr107–Asp600 and Gln631–Phe815. Residues Gly836 to Ser863 are disordered. Residues Gly845–Ser863 are compositionally biased toward gly residues.

This sequence belongs to the CFAP58 family.

The protein resides in the cell projection. It is found in the cilium. The protein localises to the flagellum. The polypeptide is Cilia- and flagella-associated protein 58 (Chlamydomonas reinhardtii (Chlamydomonas smithii)).